Reading from the N-terminus, the 239-residue chain is RNA-binding protein 38 (239 aa).

An RRM domain is found at Thr-34–Leu-111.

This sequence belongs to the RBM38 family.

The protein localises to the cytoplasm. It localises to the cytosol. Its subcellular location is the nucleus. Functionally, RNA-binding protein that specifically bind the 3'-UTR of CDKN1A transcripts, leading to maintain the stability of CDKN1A transcripts, thereby acting as a mediator of the p53/TP53 family to regulate CDKN1A. CDKN1A is a cyclin-dependent kinase inhibitor transcriptionally regulated by the p53/TP53 family to induce cell cycle arrest. Isoform 1, but not isoform 2, has the ability to induce cell cycle arrest in G1 and maintain the stability of CDKN1A transcripts induced by p53/TP53. Also acts as a mRNA splicing factor. Specifically regulates the expression of FGFR2-IIIb, an epithelial cell-specific isoform of FGFR2. Plays a role in myogenic differentiation. Its function is as follows. (Microbial infection) Essential factor for the splicing of the pre-mRNAs of human parvovirus B19 (B19V) and for the expression of B19V 11-kDa protein, which enhances viral replication. The sequence is that of RNA-binding protein 38 (RBM38) from Homo sapiens (Human).